The chain runs to 324 residues: Delta-aminolevulinic acid dehydratase (324 aa).

C120, C122, and C130 together coordinate Zn(2+). Catalysis depends on K195, which acts as the Schiff-base intermediate with substrate. Residues R205 and R217 each contribute to the 5-aminolevulinate site. E233 contributes to the Mg(2+) binding site. K248 serves as the catalytic Schiff-base intermediate with substrate. Positions 274 and 313 each coordinate 5-aminolevulinate.

Belongs to the ALAD family. In terms of assembly, homooctamer. The cofactor is Zn(2+).

The enzyme catalyses 2 5-aminolevulinate = porphobilinogen + 2 H2O + H(+). Its pathway is porphyrin-containing compound metabolism; protoporphyrin-IX biosynthesis; coproporphyrinogen-III from 5-aminolevulinate: step 1/4. Functionally, catalyzes an early step in the biosynthesis of tetrapyrroles. Binds two molecules of 5-aminolevulinate per subunit, each at a distinct site, and catalyzes their condensation to form porphobilinogen. This is Delta-aminolevulinic acid dehydratase (hemB) from Bacillus subtilis (strain 168).